A 184-amino-acid polypeptide reads, in one-letter code: Tumor necrosis factor receptor superfamily member 13C (184 aa).

The Extracellular segment spans residues 1–78; sequence MRRGPRSLRG…EAALPLPGLL (78 aa). A TNFR-Cys; truncated repeat occupies 18–35; the sequence is PCVPAECFDLLVRHCVAC. Cystine bridges form between Cys19–Cys32 and Cys24–Cys35. The segment at 26-31 is essential for TNFSF13B/TALL1/BAFF/BLyS binding; sequence DLLVRH. Residues 43–62 form a disordered region; sequence PKPAGASSPAPRTALQPQES. A helical; Signal-anchor for type III membrane protein membrane pass occupies residues 79 to 99; it reads FGAPALLGLALVLALVLVGLV. Over 100-184 the chain is Cytoplasmic; the sequence is SWRRRQRRLR…TTKTAGPEQQ (85 aa). Residues 107–184 are disordered; sequence RLRGASSAEA…TTKTAGPEQQ (78 aa). Over residues 118-128 the composition is skewed to basic and acidic residues; it reads DGDKDAPEPLD. A compositionally biased stretch (polar residues) spans 168 to 184; that stretch reads LGSTELVTTKTAGPEQQ.

Highly expressed in spleen and lymph node, and in resting B-cells. Detected at lower levels in activated B-cells, resting CD4+ T-cells, in thymus and peripheral blood leukocytes.

The protein resides in the membrane. B-cell receptor specific for TNFSF13B/TALL1/BAFF/BLyS. Promotes the survival of mature B-cells and the B-cell response. The protein is Tumor necrosis factor receptor superfamily member 13C (TNFRSF13C) of Homo sapiens (Human).